A 63-amino-acid polypeptide reads, in one-letter code: Conotoxin PnMRCL-0111 (63 aa).

An N-terminal signal peptide occupies residues 1 to 19 (MRCLPVFIVLLLLIVSAPG). Residues 20 to 49 (FDARPKTEDDVPLSSFHDDLQRTVRTLLDI) constitute a propeptide that is removed on maturation. At Trp62 the chain carries Tryptophan amide.

Belongs to the conotoxin T superfamily. In terms of processing, contains 2 disulfide bonds that can be either 'C1-C3, C2-C4' or 'C1-C4, C2-C3', since these disulfide connectivities have been observed for conotoxins with cysteine framework V (for examples, see AC P0DQQ7 and AC P81755). Expressed by the venom duct.

The protein localises to the secreted. This is Conotoxin PnMRCL-0111 from Conus pennaceus (Feathered cone).